Here is a 2710-residue protein sequence, read N- to C-terminus: Serine/threonine-protein kinase ATR (2710 aa).

An FAT domain is found at 1647 to 2257 (TLAKASFRCQ…LWMMAAVSKS (611 aa)). One can recognise a PI3K/PI4K catalytic domain in the interval 2368–2680 (IADDAEILNS…GVNAAPSLPL (313 aa)). The interval 2374 to 2380 (ILNSLQK) is G-loop. The segment at 2545-2553 (GLGDRHGEN) is catalytic loop. Positions 2565-2589 (HVDFSCLFDKGLLLEKPEVVPFRFT) are activation loop. In terms of domain architecture, FATC spans 2678 to 2710 (LPLSVEGQARRLIAEAVSHSNLGKMYVWWMAWF).

The protein belongs to the PI3/PI4-kinase family. ATM subfamily.

The protein localises to the nucleus. The catalysed reaction is L-seryl-[protein] + ATP = O-phospho-L-seryl-[protein] + ADP + H(+). It catalyses the reaction L-threonyl-[protein] + ATP = O-phospho-L-threonyl-[protein] + ADP + H(+). Functionally, probable serine/threonine kinase. Seems to play a central role in cell-cycle regulation by transmitting DNA damage signals to downstream effectors of cell-cycle progression. May recognize the substrate consensus sequence [ST]-Q and phosphorylate histone variant H2AX to form H2AXS139ph at sites of DNA damage, thereby regulating DNA damage response mechanism. This Oryza sativa subsp. japonica (Rice) protein is Serine/threonine-protein kinase ATR.